The primary structure comprises 262 residues: Trypsin eta (262 aa).

Residues 1–22 (MNKVILRILAVLFLLGIYAVSA) form the signal peptide. Positions 23-27 (QSDGR) are cleaved as a propeptide — activation peptide. One can recognise a Peptidase S1 domain in the interval 28-259 (IVGGADTSSY…YKDWIAKQRT (232 aa)). Cysteines 59 and 75 form a disulfide. Active-site charge relay system residues include His-74 and Asp-120. 2 disulfides stabilise this stretch: Cys-185-Cys-200 and Cys-211-Cys-235. The active-site Charge relay system is the Ser-215.

This sequence belongs to the peptidase S1 family.

The protein resides in the secreted. It is found in the extracellular space. The enzyme catalyses Preferential cleavage: Arg-|-Xaa, Lys-|-Xaa.. The protein is Trypsin eta (etaTry) of Drosophila melanogaster (Fruit fly).